The sequence spans 449 residues: Tubulin alpha chain (449 aa).

Residues Q11, E71, S140, G144, T145, T179, N206, and N228 each coordinate GTP. Residue E71 participates in Mg(2+) binding. E254 is a catalytic residue.

Belongs to the tubulin family. As to quaternary structure, dimer of alpha and beta chains. A typical microtubule is a hollow water-filled tube with an outer diameter of 25 nm and an inner diameter of 15 nM. Alpha-beta heterodimers associate head-to-tail to form protofilaments running lengthwise along the microtubule wall with the beta-tubulin subunit facing the microtubule plus end conferring a structural polarity. Microtubules usually have 13 protofilaments but different protofilament numbers can be found in some organisms and specialized cells. Mg(2+) serves as cofactor.

Its subcellular location is the cytoplasm. The protein localises to the cytoskeleton. The catalysed reaction is GTP + H2O = GDP + phosphate + H(+). Its function is as follows. Tubulin is the major constituent of microtubules, a cylinder consisting of laterally associated linear protofilaments composed of alpha- and beta-tubulin heterodimers. Microtubules grow by the addition of GTP-tubulin dimers to the microtubule end, where a stabilizing cap forms. Below the cap, tubulin dimers are in GDP-bound state, owing to GTPase activity of alpha-tubulin. This chain is Tubulin alpha chain (TUB1), found in Pneumocystis carinii.